Consider the following 529-residue polypeptide: F-box/LRR-repeat protein At5g63520 (529 aa).

A disordered region spans residues 1–22 (MAEVSLTKKEMTTKGKSENSKK). One can recognise an F-box domain in the interval 31-78 (VPIAAMNEDLLHNILLRLPAKSFAFASCVNRFWSSVCNRILSRPKMIS). 2 LRR repeats span residues 265-288 (GNEP…IFAR) and 418-441 (QVYL…LRNL).

The protein is F-box/LRR-repeat protein At5g63520 of Arabidopsis thaliana (Mouse-ear cress).